A 211-amino-acid polypeptide reads, in one-letter code: Ion-translocating oxidoreductase complex subunit G (211 aa).

Residues 9–29 (GLTLAIFACATTGLVAMTQYL) form a helical membrane-spanning segment. At threonine 175 the chain carries FMN phosphoryl threonine.

The protein belongs to the RnfG family. In terms of assembly, the complex is composed of six subunits: RnfA, RnfB, RnfC, RnfD, RnfE and RnfG. FMN serves as cofactor.

It is found in the cell inner membrane. Its function is as follows. Part of a membrane-bound complex that couples electron transfer with translocation of ions across the membrane. This Vibrio vulnificus (strain YJ016) protein is Ion-translocating oxidoreductase complex subunit G.